Here is a 187-residue protein sequence, read N- to C-terminus: Ribosome-recycling factor (187 aa).

This sequence belongs to the RRF family.

The protein resides in the cytoplasm. Responsible for the release of ribosomes from messenger RNA at the termination of protein biosynthesis. May increase the efficiency of translation by recycling ribosomes from one round of translation to another. This Rhodopseudomonas palustris (strain BisA53) protein is Ribosome-recycling factor.